The primary structure comprises 475 residues: Ankyrin repeat, SAM and basic leucine zipper domain-containing protein 1 (475 aa).

Residues 1–22 form a disordered region; it reads MAAGALRGLPVAGGGESSESED. Phosphoserine occurs at positions 17, 18, and 20. ANK repeat units lie at residues 45–74, 78–107, 110–144, 148–177, 181–210, and 214–243; these read EKKE…SVDS, YGWT…NASF, DKQT…DPNV, RLMT…EVNT, NGYT…NKML, and DGKM…PLEG. One can recognise an SAM domain in the interval 272–334; that stretch reads SYTAFGDLEV…KILATLKELQ (63 aa).

Interacts with DDX4, PIWIL1, RANBP9 and TDRD1.

Its subcellular location is the cytoplasm. Functionally, plays a central role during spermatogenesis by repressing transposable elements and preventing their mobilization, which is essential for the germline integrity. Acts via the piRNA metabolic process, which mediates the repression of transposable elements during meiosis by forming complexes composed of piRNAs and Piwi proteins and governs the methylation and subsequent repression of transposons. Its association with pi-bodies suggests a participation in the primary piRNAs metabolic process. Required prior to the pachytene stage to facilitate the production of multiple types of piRNAs, including those associated with repeats involved in the regulation of retrotransposons. May act by mediating protein-protein interactions during germ cell maturation. This Colobus guereza (Mantled guereza) protein is Ankyrin repeat, SAM and basic leucine zipper domain-containing protein 1 (ASZ1).